The chain runs to 454 residues: MSDNDTIVAQATPPGRGGVGILRISGFKAREVAETVLGKLPKPRYADYLPFKDADGSVLDQGIALWFPGPNSFTGEDVLELQGHGGPVILDLLLKRILTIPGLRIARPGEFSERAFLNDKLDLAQAEAIADLIDASSEQAARSALNSLQGAFSARVNHLVEALTHLRIYVEAAIDFPDEEIDFLSDGKIEAQLNDVIADLDAVRAEARQGSLLREGMKVVIAGRPNAGKSSLLNALAGREAAIVTDIAGTTRDVLREHIHIDGMPLHIIDTAGLREASDEVERIGIERAWQEIEQADRVLFMVDGTTTDAVDPAEIWPEFIARLPAKLPITVVRNKADITGETLGISEVNGHALIRLSARTGEGVDVLRNHLKQSMGFDTNMEGGFLARRRHLQALEQAAEHLQQGKAQLLGAWAGELLAEELRLAQQNLSEITGEFTSDDLLGRIFSSFCIGK.

3 residues coordinate (6S)-5-formyl-5,6,7,8-tetrahydrofolate: R23, E80, and K120. Residues 216 to 377 enclose the TrmE-type G domain; sequence GMKVVIAGRP…LRNHLKQSMG (162 aa). N226 lines the K(+) pocket. Residues 226–231, 245–251, 270–273, 335–338, and 358–360 contribute to the GTP site; these read NAGKSS, TDIAGTT, DTAG, NKAD, and SAR. S230 serves as a coordination point for Mg(2+). Positions 245, 247, and 250 each coordinate K(+). T251 contacts Mg(2+). A (6S)-5-formyl-5,6,7,8-tetrahydrofolate-binding site is contributed by K454.

It belongs to the TRAFAC class TrmE-Era-EngA-EngB-Septin-like GTPase superfamily. TrmE GTPase family. In terms of assembly, homodimer. Heterotetramer of two MnmE and two MnmG subunits. K(+) serves as cofactor.

It is found in the cytoplasm. Functionally, exhibits a very high intrinsic GTPase hydrolysis rate. Involved in the addition of a carboxymethylaminomethyl (cmnm) group at the wobble position (U34) of certain tRNAs, forming tRNA-cmnm(5)s(2)U34. This Shigella dysenteriae serotype 1 (strain Sd197) protein is tRNA modification GTPase MnmE.